Consider the following 393-residue polypeptide: Phosphopentomutase (393 aa).

Mn(2+)-binding residues include aspartate 11, aspartate 282, histidine 287, aspartate 323, histidine 324, and histidine 335.

It belongs to the phosphopentomutase family. Requires Mn(2+) as cofactor.

The protein resides in the cytoplasm. The catalysed reaction is 2-deoxy-alpha-D-ribose 1-phosphate = 2-deoxy-D-ribose 5-phosphate. It carries out the reaction alpha-D-ribose 1-phosphate = D-ribose 5-phosphate. The protein operates within carbohydrate degradation; 2-deoxy-D-ribose 1-phosphate degradation; D-glyceraldehyde 3-phosphate and acetaldehyde from 2-deoxy-alpha-D-ribose 1-phosphate: step 1/2. Functionally, isomerase that catalyzes the conversion of deoxy-ribose 1-phosphate (dRib-1-P) and ribose 1-phosphate (Rib-1-P) to deoxy-ribose 5-phosphate (dRib-5-P) and ribose 5-phosphate (Rib-5-P), respectively. This chain is Phosphopentomutase, found in Caldanaerobacter subterraneus subsp. tengcongensis (strain DSM 15242 / JCM 11007 / NBRC 100824 / MB4) (Thermoanaerobacter tengcongensis).